We begin with the raw amino-acid sequence, 310 residues long: UPF0761 membrane protein VF_0100 (310 aa).

6 helical membrane passes run 34–54, 97–117, 136–156, 178–198, 207–227, and 242–262; these read YMAYITLLSLVPLITVLLSVL, MTAVGSGFLFVASVMLISSID, FSLYWMILTLGPLLVGASLAA, LLGWLPIILSFSAFVGLYLLV, HALIGAMSAGCLFEFSKVGFA, and ALAAVPILFVWVYLCWIIVLI.

It belongs to the UPF0761 family.

It is found in the cell inner membrane. The chain is UPF0761 membrane protein VF_0100 from Aliivibrio fischeri (strain ATCC 700601 / ES114) (Vibrio fischeri).